Consider the following 117-residue polypeptide: Reprimo-like protein (117 aa).

The chain crosses the membrane as a helical span at residues 64–84; that stretch reads VAQIAVLCVLSLTVVFGVFFL. Ser-106 is subject to Phosphoserine.

Belongs to the reprimo family.

It localises to the membrane. In Mus musculus (Mouse), this protein is Reprimo-like protein (Rprml).